A 215-amino-acid polypeptide reads, in one-letter code: Probable septum site-determining protein MinC (215 aa).

This sequence belongs to the MinC family. In terms of assembly, interacts with MinD and FtsZ.

Cell division inhibitor that blocks the formation of polar Z ring septums. Rapidly oscillates between the poles of the cell to destabilize FtsZ filaments that have formed before they mature into polar Z rings. Prevents FtsZ polymerization. The sequence is that of Probable septum site-determining protein MinC from Clostridium botulinum (strain Alaska E43 / Type E3).